The following is a 307-amino-acid chain: Bifunctional protein FolD 3 (307 aa).

NADP(+) contacts are provided by residues G169–S171, S194, and I235.

This sequence belongs to the tetrahydrofolate dehydrogenase/cyclohydrolase family. In terms of assembly, homodimer.

It catalyses the reaction (6R)-5,10-methylene-5,6,7,8-tetrahydrofolate + NADP(+) = (6R)-5,10-methenyltetrahydrofolate + NADPH. The catalysed reaction is (6R)-5,10-methenyltetrahydrofolate + H2O = (6R)-10-formyltetrahydrofolate + H(+). The protein operates within one-carbon metabolism; tetrahydrofolate interconversion. Its function is as follows. Catalyzes the oxidation of 5,10-methylenetetrahydrofolate to 5,10-methenyltetrahydrofolate and then the hydrolysis of 5,10-methenyltetrahydrofolate to 10-formyltetrahydrofolate. This is Bifunctional protein FolD 3 from Ectopseudomonas mendocina (strain ymp) (Pseudomonas mendocina).